A 156-amino-acid polypeptide reads, in one-letter code: Egg-lysin (156 aa).

The N-terminal stretch at 1-18 (MKLLVLCVFAMMATLAVS) is a signal peptide.

In terms of assembly, monomer. Homodimer. Molecules associate into dimers and then rapidly dissociate again. Interacts (as a monomer) with the egg vitelline layer protein VERL (via VERL repeats); each VERL chain can bind multiple copies of lysin. As to expression, sperm.

The protein localises to the cytoplasmic vesicle. It localises to the secretory vesicle. It is found in the acrosome lumen. Its function is as follows. Creates a 3 um hole in the egg vitelline layer through which the sperm passes. Does not have enzyme activity. Species-specific interaction between the sperm protein lysin and the egg protein VERL exposes a basic surface on lysin that may dissociate the egg vitelline layer via electrostatic repulsion. Plays a role in ensuring species-specific fertilization. The protein is Egg-lysin of Haliotis cracherodii (Black abalone).